The sequence spans 320 residues: o-succinylbenzoate synthase (320 aa).

The active-site Proton donor is the Lys-133. 3 residues coordinate Mg(2+): Asp-161, Glu-190, and Asp-213. Lys-235 serves as the catalytic Proton acceptor.

The protein belongs to the mandelate racemase/muconate lactonizing enzyme family. MenC type 1 subfamily. Requires a divalent metal cation as cofactor.

It carries out the reaction (1R,6R)-6-hydroxy-2-succinyl-cyclohexa-2,4-diene-1-carboxylate = 2-succinylbenzoate + H2O. The protein operates within quinol/quinone metabolism; 1,4-dihydroxy-2-naphthoate biosynthesis; 1,4-dihydroxy-2-naphthoate from chorismate: step 4/7. Its pathway is quinol/quinone metabolism; menaquinone biosynthesis. Converts 2-succinyl-6-hydroxy-2,4-cyclohexadiene-1-carboxylate (SHCHC) to 2-succinylbenzoate (OSB). The sequence is that of o-succinylbenzoate synthase from Salmonella arizonae (strain ATCC BAA-731 / CDC346-86 / RSK2980).